The following is a 512-amino-acid chain: GMP synthase [glutamine-hydrolyzing] (512 aa).

The region spanning 7–197 is the Glutamine amidotransferase type-1 domain; the sequence is TIIVLDFGSQ…VFGVCGCSEG (191 aa). Cys84 (nucleophile) is an active-site residue. Residues His171 and Glu173 contribute to the active site. A GMPS ATP-PPase domain is found at 198-387; the sequence is WNMENFIEVE…LGIPDEIVWR (190 aa). 225–231 contacts ATP; that stretch reads SGGVDSS.

Homodimer.

The catalysed reaction is XMP + L-glutamine + ATP + H2O = GMP + L-glutamate + AMP + diphosphate + 2 H(+). Its pathway is purine metabolism; GMP biosynthesis; GMP from XMP (L-Gln route): step 1/1. Its function is as follows. Catalyzes the synthesis of GMP from XMP. This is GMP synthase [glutamine-hydrolyzing] from Bacillus mycoides (strain KBAB4) (Bacillus weihenstephanensis).